A 297-amino-acid chain; its full sequence is uncharacterized protein (297 aa).

The protein belongs to the glycosyltransferase 2 family.

This is an uncharacterized protein from Mycoplasma genitalium (strain ATCC 33530 / DSM 19775 / NCTC 10195 / G37) (Mycoplasmoides genitalium).